Consider the following 268-residue polypeptide: Zinc transporter ZupT (268 aa).

8 helical membrane passes run 5–25 (ILFAFSLTLLAGLATGIGSII), 38–58 (TVSLGFSAGVMLYVSMIEIFV), 72–92 (AGYIWTVIAFFVGIFVIALID), 124–144 (MGLFSALAIGIHNFPEGLATF), 152–172 (TLGISIAVAIAIHNIPEGLAV), 187–207 (FVLSFLSGLAEPIGAIAGFFL), 211–231 (LFTELTFGLVFASVAGIMVYI), and 248–268 (LAIGGLVGGMLVMAVSLLLFL). Asn-136 and Glu-139 together coordinate Fe(2+). The Zn(2+) site is built by Glu-139 and His-164. Asn-165, Glu-168, and Glu-197 together coordinate Fe(2+). Glu-168 is a Zn(2+) binding site.

This sequence belongs to the ZIP transporter (TC 2.A.5) family. ZupT subfamily.

The protein resides in the cell inner membrane. The catalysed reaction is Zn(2+)(in) = Zn(2+)(out). Functionally, mediates zinc uptake. May also transport other divalent cations. This chain is Zinc transporter ZupT, found in Chlorobaculum parvum (strain DSM 263 / NCIMB 8327) (Chlorobium vibrioforme subsp. thiosulfatophilum).